The following is a 288-amino-acid chain: Programmed cell death protein 1 (288 aa).

The first 24 residues, 1 to 24, serve as a signal peptide directing secretion; the sequence is MQIPQAPWPVVWAVLQLGWRPGWF. The segment at 25 to 34 is nivolumab binding; the sequence is LDSPDRPWNP. Residues 25 to 170 lie on the Extracellular side of the membrane; the sequence is LDSPDRPWNP…RPAGQFQTLV (146 aa). Residues 35-145 enclose the Ig-like V-type domain; the sequence is PTFSPALLVV…ESLRAELRVT (111 aa). Residues asparagine 49, asparagine 58, asparagine 74, and asparagine 116 are each glycosylated (N-linked (GlcNAc...) asparagine). The cysteines at positions 54 and 123 are disulfide-linked. Positions 70–77 are interaction with CD274/PDCD1L1; sequence MSPSNQTD. Positions 74–99 are pembrolizumab binding; it reads NQTDKLAAFPEDRSQPGQDCRFRVTQ. A helical transmembrane segment spans residues 171 to 191; sequence VGVVGGLLGSLVLLVWVLAVI. Residues 192 to 288 lie on the Cytoplasmic side of the membrane; that stretch reads CSRAARGTIG…PEDGHCSWPL (97 aa). The ITIM motif signature appears at 221-226; the sequence is VDYGEL. A Phosphotyrosine modification is found at tyrosine 223. A Glycyl lysine isopeptide (Lys-Gly) (interchain with G-Cter in ubiquitin) cross-link involves residue lysine 233. At threonine 234 the chain carries Phosphothreonine; by MAPK3. Positions 247–251 match the ITSM motif motif; sequence EYATI. Position 248 is a phosphotyrosine (tyrosine 248). The segment at 254-288 is disordered; the sequence is PSGMGTSSPARRGSADGPRSAQPLRPEDGHCSWPL. The segment covering 278-288 has biased composition (basic and acidic residues); sequence RPEDGHCSWPL.

Monomer. Interacts with CD274/PDCD1L1. Interacts with CD273/PDCD1LG2. Interacts with FBXO38; leading to ubiquitination and degradation of PDCD1 by the proteasome. Post-translationally, ubiquitinated at Lys-233 by the SCF(FBXO38) complex, leading to its proteasomal degradation. Ubiquitinated via 'Lys-48'-linked polyubiquitin chains. Deubiquitinated and thus stabilized by USP5. Tyrosine phosphorylated at Tyr-223 (within ITIM motif) and Tyr-248 (ITSM motif) upon ligand binding. Phosphorylation at Tyr-248 promotes the recruitment of the protein tyrosine phosphatase PTPN11/SHP-2 that mediates dephosphorylation of key TCR proximal signaling molecules, such as ZAP70, PRKCQ/PKCtheta and CD247/CD3zeta. Phosphorylation at Thr-234 promotes the recruitment of the deubiquitinase USP5. In terms of processing, N-glycosylation at Asn-58 contains at least two N-acetylglucosamine units and one fucose. N-glycosylation does not affect binding to nivolumab drug.

It is found in the cell membrane. Inhibited by pembrolizumab (also named MK-3475 or lambrolizumab), a monoclonal antibody that prevents the interaction with CD274/PDCD1L1. Inhibited by nivolumab (also named ONO-4538, BMS-936558 or Opdivo), a monoclonal antibody that prevents the interaction with CD274/PDCD1L1. The interaction with nivolumab is not dependent on glycosylation and depends on a loop at the N-terminus (N-terminal loop, corresponding to residues 25-34). Targeting the interaction between PDCD1 and CD274/PDCD1L1 with pembrolizumab and nivolumab antibodies has demonstrated great promise as a strategy for controlling and eradicating cancer. Pembrolizumab and nivolumab are used for treatment of patients with advanced melanoma. These antibodies are also effective against other cancers, such as non-small cell lung cancer, renal cell carcinoma, bladder cancer and Hodgkin's lymphoma. Its function is as follows. Inhibitory receptor on antigen activated T-cells that plays a critical role in induction and maintenance of immune tolerance to self. Delivers inhibitory signals upon binding to ligands CD274/PDCD1L1 and CD273/PDCD1LG2. Following T-cell receptor (TCR) engagement, PDCD1 associates with CD3-TCR in the immunological synapse and directly inhibits T-cell activation. Suppresses T-cell activation through the recruitment of PTPN11/SHP-2: following ligand-binding, PDCD1 is phosphorylated within the ITSM motif, leading to the recruitment of the protein tyrosine phosphatase PTPN11/SHP-2 that mediates dephosphorylation of key TCR proximal signaling molecules, such as ZAP70, PRKCQ/PKCtheta and CD247/CD3zeta. In terms of biological role, the PDCD1-mediated inhibitory pathway is exploited by tumors to attenuate anti-tumor immunity and escape destruction by the immune system, thereby facilitating tumor survival. The interaction with CD274/PDCD1L1 inhibits cytotoxic T lymphocytes (CTLs) effector function. The blockage of the PDCD1-mediated pathway results in the reversal of the exhausted T-cell phenotype and the normalization of the anti-tumor response, providing a rationale for cancer immunotherapy. The sequence is that of Programmed cell death protein 1 from Homo sapiens (Human).